Here is a 309-residue protein sequence, read N- to C-terminus: N(5)-(carboxyethyl)ornithine synthase (309 aa).

Arg15, Lys71, and His92 together coordinate pyruvate. Position 171-176 (171-176 (GSGNVA)) interacts with NADP(+).

The protein belongs to the AlaDH/PNT family. CEOS subfamily. As to quaternary structure, homotetramer.

The catalysed reaction is N(5)-[1(S)-1-carboxyethyl]-L-ornithine + NADP(+) + H2O = L-ornithine + pyruvate + NADPH + H(+). Its function is as follows. Catalyzes the NADPH-dependent reductive condensation between pyruvic acid and the side chain amino group of L-ornithine to form N(5)-(L-1-carboxyethyl)-L-ornithine. To a lesser extent, can also use L-lysine as substrate (yielding N(6)-(L-1-carboxyethyl)-L-lysine). The protein is N(5)-(carboxyethyl)ornithine synthase (ceo) of Lactococcus lactis subsp. lactis (strain IL1403) (Streptococcus lactis).